Here is a 160-residue protein sequence, read N- to C-terminus: Phosphopantetheine adenylyltransferase (160 aa).

Thr-11 provides a ligand contact to substrate. ATP contacts are provided by residues 11–12 (TF) and His-19. Substrate-binding residues include Lys-43, Thr-75, and Arg-89. ATP contacts are provided by residues 90–92 (GLR), Glu-100, and 125–131 (YSFLSSS).

The protein belongs to the bacterial CoaD family. As to quaternary structure, homohexamer. The cofactor is Mg(2+).

It localises to the cytoplasm. The catalysed reaction is (R)-4'-phosphopantetheine + ATP + H(+) = 3'-dephospho-CoA + diphosphate. It functions in the pathway cofactor biosynthesis; coenzyme A biosynthesis; CoA from (R)-pantothenate: step 4/5. Functionally, reversibly transfers an adenylyl group from ATP to 4'-phosphopantetheine, yielding dephospho-CoA (dPCoA) and pyrophosphate. In Listeria monocytogenes serovar 1/2a (strain ATCC BAA-679 / EGD-e), this protein is Phosphopantetheine adenylyltransferase.